The chain runs to 226 residues: Biosynthetic peptidoglycan transglycosylase (226 aa).

Residues 7–29 traverse the membrane as a helical segment; sequence VMALSAIGLLLLPYLLTPLYRIG.

This sequence belongs to the glycosyltransferase 51 family.

It is found in the cell inner membrane. It catalyses the reaction [GlcNAc-(1-&gt;4)-Mur2Ac(oyl-L-Ala-gamma-D-Glu-L-Lys-D-Ala-D-Ala)](n)-di-trans,octa-cis-undecaprenyl diphosphate + beta-D-GlcNAc-(1-&gt;4)-Mur2Ac(oyl-L-Ala-gamma-D-Glu-L-Lys-D-Ala-D-Ala)-di-trans,octa-cis-undecaprenyl diphosphate = [GlcNAc-(1-&gt;4)-Mur2Ac(oyl-L-Ala-gamma-D-Glu-L-Lys-D-Ala-D-Ala)](n+1)-di-trans,octa-cis-undecaprenyl diphosphate + di-trans,octa-cis-undecaprenyl diphosphate + H(+). It functions in the pathway cell wall biogenesis; peptidoglycan biosynthesis. Its function is as follows. Peptidoglycan polymerase that catalyzes glycan chain elongation from lipid-linked precursors. The polypeptide is Biosynthetic peptidoglycan transglycosylase (Nitrobacter winogradskyi (strain ATCC 25391 / DSM 10237 / CIP 104748 / NCIMB 11846 / Nb-255)).